The following is a 433-amino-acid chain: GTPase Obg (433 aa).

One can recognise an Obg domain in the interval Pro-2–Leu-160. An OBG-type G domain is found at Ala-161–Glu-334. GTP contacts are provided by residues Gly-167–Ser-174, Phe-192–Thr-196, Asp-214–Gly-217, Ser-284–Asp-287, and Ser-315–Val-317. Mg(2+) contacts are provided by Ser-174 and Thr-194. Residues Tyr-355 to Gln-433 form the OCT domain.

The protein belongs to the TRAFAC class OBG-HflX-like GTPase superfamily. OBG GTPase family. Monomer. It depends on Mg(2+) as a cofactor.

Its subcellular location is the cytoplasm. An essential GTPase which binds GTP, GDP and possibly (p)ppGpp with moderate affinity, with high nucleotide exchange rates and a fairly low GTP hydrolysis rate. Plays a role in control of the cell cycle, stress response, ribosome biogenesis and in those bacteria that undergo differentiation, in morphogenesis control. This Lactobacillus acidophilus (strain ATCC 700396 / NCK56 / N2 / NCFM) protein is GTPase Obg.